A 262-amino-acid chain; its full sequence is Tropinone reductase homolog At2g29310 (262 aa).

Residue 13 to 37 participates in NADP(+) binding; sequence LVTGAASGIGYAIVEELASFGAIIH. Ser-146 provides a ligand contact to substrate. Tyr-159 functions as the Proton acceptor in the catalytic mechanism.

It belongs to the short-chain dehydrogenases/reductases (SDR) family. SDR65C subfamily.

This Arabidopsis thaliana (Mouse-ear cress) protein is Tropinone reductase homolog At2g29310.